Consider the following 180-residue polypeptide: MNDVTYYLISLASQSPAGSFGLNTNNLVTTLINIGVVLCLLIIFGKGFLRNFLDTRKNKIVNTMQISDELYSSAVEKLEKAQARLCKVENEAKQLRVTGYSEIEHEKLNLINSTYKTLERLEKKKKETCSFEQQQAFNDVRQWVLQQTLQRVLKTLNGSFNPELHLRTIRINISMLGTLK.

A helical membrane pass occupies residues valine 28 to phenylalanine 48.

It belongs to the ATPase B chain family. F-type ATPases have 2 components, F(1) - the catalytic core - and F(0) - the membrane proton channel. F(1) has five subunits: alpha(3), beta(3), gamma(1), delta(1), epsilon(1). F(0) has four main subunits: a(1), b(1), b'(1) and c(10-14). The alpha and beta chains form an alternating ring which encloses part of the gamma chain. F(1) is attached to F(0) by a central stalk formed by the gamma and epsilon chains, while a peripheral stalk is formed by the delta, b and b' chains.

Its subcellular location is the plastid. The protein resides in the chloroplast thylakoid membrane. F(1)F(0) ATP synthase produces ATP from ADP in the presence of a proton or sodium gradient. F-type ATPases consist of two structural domains, F(1) containing the extramembraneous catalytic core and F(0) containing the membrane proton channel, linked together by a central stalk and a peripheral stalk. During catalysis, ATP synthesis in the catalytic domain of F(1) is coupled via a rotary mechanism of the central stalk subunits to proton translocation. Functionally, component of the F(0) channel, it forms part of the peripheral stalk, linking F(1) to F(0). The chain is ATP synthase subunit b, chloroplastic from Cuscuta obtusiflora (Peruvian dodder).